The primary structure comprises 747 residues: ATP-dependent DNA helicase Hel308 (747 aa).

ATP contacts are provided by residues Q29 and 47–54; that span reads VPTASGKT. Positions 34-200 constitute a Helicase ATP-binding domain; it reads DAGVADGESL…WLDAELVDSS (167 aa). A DEAH box motif is present at residues 145–148; it reads DEVH. In terms of domain architecture, Helicase C-terminal spans 234–434; it reads PTEAVVRETL…REPSMRTHLL (201 aa). The disordered stretch occupies residues 711 to 747; sequence AAGHQQPEMDGVTPDADVKESAAAAGTDDGQANLGDF.

This sequence belongs to the helicase family. Hel308 subfamily. In terms of assembly, monomer.

It carries out the reaction Couples ATP hydrolysis with the unwinding of duplex DNA by translocating in the 3'-5' direction.. The enzyme catalyses ATP + H2O = ADP + phosphate + H(+). In terms of biological role, DNA-dependent ATPase and 3'-5' DNA helicase that may be involved in repair of stalled replication forks. The polypeptide is ATP-dependent DNA helicase Hel308 (Natronomonas pharaonis (strain ATCC 35678 / DSM 2160 / CIP 103997 / JCM 8858 / NBRC 14720 / NCIMB 2260 / Gabara) (Halobacterium pharaonis)).